A 273-amino-acid chain; its full sequence is NADPH-dependent 7-cyano-7-deazaguanine reductase (273 aa).

81 to 83 contributes to the substrate binding site; the sequence is VES. 83–84 lines the NADPH pocket; sequence SK. The active-site Thioimide intermediate is the Cys179. Asp186 (proton donor) is an active-site residue. Residue 218–219 participates in substrate binding; it reads AE. 247–248 provides a ligand contact to NADPH; it reads RG.

This sequence belongs to the GTP cyclohydrolase I family. QueF type 2 subfamily. In terms of assembly, homodimer.

The protein resides in the cytoplasm. It catalyses the reaction 7-aminomethyl-7-carbaguanine + 2 NADP(+) = 7-cyano-7-deazaguanine + 2 NADPH + 3 H(+). It functions in the pathway tRNA modification; tRNA-queuosine biosynthesis. In terms of biological role, catalyzes the NADPH-dependent reduction of 7-cyano-7-deazaguanine (preQ0) to 7-aminomethyl-7-deazaguanine (preQ1). This is NADPH-dependent 7-cyano-7-deazaguanine reductase from Rickettsia felis (strain ATCC VR-1525 / URRWXCal2) (Rickettsia azadi).